Consider the following 222-residue polypeptide: Probable nicotinate-nucleotide adenylyltransferase (222 aa).

The protein belongs to the NadD family.

It catalyses the reaction nicotinate beta-D-ribonucleotide + ATP + H(+) = deamido-NAD(+) + diphosphate. It functions in the pathway cofactor biosynthesis; NAD(+) biosynthesis; deamido-NAD(+) from nicotinate D-ribonucleotide: step 1/1. Catalyzes the reversible adenylation of nicotinate mononucleotide (NaMN) to nicotinic acid adenine dinucleotide (NaAD). The sequence is that of Probable nicotinate-nucleotide adenylyltransferase from Xylella fastidiosa (strain M23).